A 541-amino-acid chain; its full sequence is Kinesin light chain 1 (541 aa).

Residues 27-156 (KTKQVIQGLE…HLEFMNQLKK (130 aa)) adopt a coiled-coil conformation. Basic and acidic residues predominate over residues 156–176 (KYDDDISPSEDKDSDSSKEPL). The segment at 156–201 (KYDDDISPSEDKDSDSSKEPLDDLFPNDEDEPGQGIQHSDSSAAAA) is disordered. At serine 162 the chain carries Phosphoserine. 5 TPR repeats span residues 211-244 (LRTL…LEKT), 253-286 (ATML…REKT), 295-328 (AATL…REKV), 337-370 (AKQL…YQTK), and 380-413 (AKTK…AHEA). A Phosphotyrosine modification is found at tyrosine 448. Residue serine 459 is modified to Phosphoserine. The TPR 6 repeat unit spans residues 463–496 (TTTLKNLGALYRRQGKFEAAETLEEAAMRSRKQG). Residues 493 to 541 (RKQGLDNVHKQRVAEVLNDPESMEKRRSRESLNMDVVKYESGPDGGEEA) form a disordered region. 2 stretches are compositionally biased toward basic and acidic residues: residues 495–505 (QGLDNVHKQRV) and 514–524 (SMEKRRSRESL). Phosphoserine; by AMPK occurs at positions 520 and 523.

Belongs to the kinesin light chain family. In terms of assembly, oligomeric complex composed of two heavy chains and two light chains. Interacts with SPAG9. Interacts with ATCAY; may link mitochondria to KLC1 and regulate mitochondria localization into neuron projections. Interacts (via TPR repeats) with TOR1A; the interaction associates TOR1A with the kinesin oligomeric complex. Interacts with BORCS5. Interacts with MAPK8IP3/JIP3 and NTRK2/TRKB; interaction with NTRK2/TRKB is mediated by MAPK8IP3/JIP3. Interacts with CLSTN1; phosphorylation at Ser-459 inhibits interaction with CLSTN1. Post-translationally, phosphorylation at Ser-459 by ERK inhibits interaction with CLSTN1 and localization to cytoplasmic vesicles.

The protein resides in the cell projection. The protein localises to the growth cone. Its subcellular location is the cytoplasmic vesicle. It is found in the cytoplasm. It localises to the cytoskeleton. Its function is as follows. Kinesin is a microtubule-associated force-producing protein that may play a role in organelle transport. The light chain may function in coupling of cargo to the heavy chain or in the modulation of its ATPase activity. The polypeptide is Kinesin light chain 1 (Klc1) (Mus musculus (Mouse)).